Here is a 1020-residue protein sequence, read N- to C-terminus: Valine--tRNA ligase (1020 aa).

Positions 45-55 (PNVTGALHVGH) match the 'HIGH' region motif. Residues 661 to 665 (KMSKT) carry the 'KMSKS' region motif. Residue Lys664 coordinates ATP. Positions 955–1020 (AEKDRLEKAK…EALARLAELG (66 aa)) form a coiled coil.

Belongs to the class-I aminoacyl-tRNA synthetase family. ValS type 1 subfamily. In terms of assembly, monomer.

It is found in the cytoplasm. The catalysed reaction is tRNA(Val) + L-valine + ATP = L-valyl-tRNA(Val) + AMP + diphosphate. Functionally, catalyzes the attachment of valine to tRNA(Val). As ValRS can inadvertently accommodate and process structurally similar amino acids such as threonine, to avoid such errors, it has a 'posttransfer' editing activity that hydrolyzes mischarged Thr-tRNA(Val) in a tRNA-dependent manner. This Ruegeria pomeroyi (strain ATCC 700808 / DSM 15171 / DSS-3) (Silicibacter pomeroyi) protein is Valine--tRNA ligase.